The chain runs to 1081 residues: Teashirt homolog 3 (1081 aa).

Disordered regions lie at residues 141–161 and 238–257; these read PSSE…SSCG and HYRD…WSKP. Over residues 148–161 the composition is skewed to low complexity; sequence GSSSSSSSSSSSCG. 2 C2H2-type zinc fingers span residues 214–238 and 275–299; these read FRCK…ETGH and LKCM…KTKH. The span at 238 to 247 shows a compositional bias: basic and acidic residues; sequence HYRDDNHETD. A disordered region spans residues 325-364; it reads SLELELPSSPDSTGGTPKATISDTNDALQKNSNPYITPNN. A compositionally biased stretch (polar residues) spans 335 to 364; sequence DSTGGTPKATISDTNDALQKNSNPYITPNN. The C2H2-type 3; atypical zinc finger occupies 386-404; sequence LKCMECGSSHDTLQELTAH. A compositionally biased stretch (basic and acidic residues) spans 473-491; sequence EVDKEKAVTDEKPKQKDKP. 4 disordered regions span residues 473–502, 579–604, 626–687, and 855–897; these read EVDK…DISS, NSEI…PMPK, EKMK…LAEP, and TESH…RQSN. Residues 581-603 show a composition bias toward polar residues; that stretch reads EIVSPTKNQTLVSPPSSQTSPMP. Positions 606-630 form a coiled coil; it reads NFHAMEELVKKVTEKVAKVEEKMKE. Phosphoserine is present on Ser682. Residues 856–869 show a composition bias toward low complexity; sequence ESHTSKSSTPSSIS. Positions 891 to 961 form a DNA-binding region, homeobox; atypical; the sequence is RKGRQSNWNP…NVKYQLRRTG (71 aa). 2 consecutive C2H2-type zinc fingers follow at residues 976–998 and 1041–1064; these read FFCN…LESH and YQCK…SKTH.

The protein belongs to the teashirt C2H2-type zinc-finger protein family. Interacts (via homeobox domain) with APBB1 (via PID domain 1). Interacts (via N-terminus) with HDAC1 and HDAC2; the interaction is direct. Found in a trimeric complex with APBB1 and HDAC1; the interaction between HDAC1 and APBB1 is mediated by TSHZ3. As to expression, expressed in brain; strongly reduced in post-mortem elderly subjects with Alzheimer disease. Expressed in the fetal neocortex.

The protein resides in the nucleus. It localises to the cell projection. It is found in the growth cone. Functionally, transcriptional regulator involved in developmental processes. Functions in association with APBB1, SET and HDAC factors as a transcriptional repressor, that inhibits the expression of CASP4. TSHZ3-mediated transcription repression involves the recruitment of histone deacetylases HDAC1 and HDAC2. Associates with chromatin in a region surrounding the CASP4 transcriptional start site(s). Regulates the development of neurons involved in both respiratory rhythm and airflow control. Promotes maintenance of nucleus ambiguus (nA) motoneurons, which govern upper airway function, and establishes a respiratory rhythm generator (RRG) activity compatible with survival at birth. Involved in the differentiation of the proximal uretic smooth muscle cells during developmental processes. Involved in the up-regulation of myocardin, that directs the expression of smooth muscle cells in the proximal ureter. Involved in the modulation of glutamatergic synaptic transmission and long-term synaptic potentiation. The protein is Teashirt homolog 3 (TSHZ3) of Homo sapiens (Human).